The chain runs to 329 residues: Protein phosphatase 1 regulatory subunit 42 (329 aa).

LRR repeat units lie at residues 30–51, 52–73, 74–95, 96–117, 118–139, 148–169, and 170–191; these read KLTHLNFSDKNIEEIDDLSVCR, NLTVLYLYDNQISQICNLGFAS, NLTHLYMQNNNISCIENLSSLH, KLSKLFLGGNSITVVEGLEELK, SLKELHVEGQKLPCGEKLAFDP, TLCILNISKNNIDELWDLAPLR, and KMTHLFAADNQLHDIQELETVF. One can recognise an LRRCT domain in the interval 205-243; the sequence is NPVCHKPKYRDRLITVCKFLDDLDGKQINELSRQFLINW. The disordered stretch occupies residues 268–329; sequence STSADFHLGP…SSTEWQSLKI (62 aa). Residues 318–329 show a composition bias toward polar residues; it reads GDSSTEWQSLKI.

Its subcellular location is the cytoplasm. The protein localises to the cytoskeleton. The protein resides in the microtubule organizing center. It is found in the centrosome. May regulate phosphatase activity of protein phosphatase 1 (PP1) complexes. This Danio rerio (Zebrafish) protein is Protein phosphatase 1 regulatory subunit 42 (ppp1r42).